A 1430-amino-acid chain; its full sequence is rRNA biogenesis protein RRP5 (1430 aa).

S1 motif domains lie at 74-160 (DMLV…LSLK), 176-238 (GFIF…CTCV), 261-329 (GSIV…LTLN), 447-511 (GDLV…VSNR), 531-592 (GNVY…LTLP), and 697-771 (QVGD…VSAK). The disordered stretch occupies residues 1041–1145 (KITNGQKKTQ…AKEKAKAEIK (105 aa)). Residues 1043–1053 (TNGQKKTQPLT) show a composition bias toward polar residues. Basic and acidic residues-rich tracts occupy residues 1057–1082 (VKEK…KSET) and 1135–1145 (SAKEKAKAEIK). Residues 1119–1157 (LNVAETQKNAAKKKRLSAKEKAKAEIKEEQRLREIEERN) are a coiled coil. HAT repeat units follow at residues 1161–1193 (KARL…FLLS), 1195–1232 (TEIE…MELV), 1265–1297 (KRKD…AYFW), 1299–1333 (GKSD…LYAK), 1335–1367 (DNND…MLIK), and 1369–1404 (GLID…LEEN).

The protein localises to the nucleus. Its subcellular location is the nucleolus. Its function is as follows. Involved in rRNA processing or maturation during ribosome biogenesis. This chain is rRNA biogenesis protein RRP5, found in Drosophila melanogaster (Fruit fly).